The following is a 1392-amino-acid chain: ATP-dependent helicase/nuclease subunit A (1392 aa).

Residues 3 to 489 (NPKWTPAQQA…IDLNQNFRSR (487 aa)) form the UvrD-like helicase ATP-binding domain. 24-31 (AAAGSGKT) is a binding site for ATP. Disordered regions lie at residues 291–319 (RGSK…KARD), 556–594 (RGAE…LEEA), and 1051–1126 (GPVQ…LDTK). Basic and acidic residues-rich tracts occupy residues 305 to 319 (ENSK…KARD) and 569 to 583 (AKGE…REPE). The 331-residue stretch at 556–886 (RGAEDAATGA…RFITVHSSKG (331 aa)) folds into the UvrD-like helicase C-terminal domain. Over residues 584–594 (SGDDESSLEEA) the composition is skewed to acidic residues. Residues 1088–1113 (ASGKTEIPGETKNSEETKTSEDKKNL) show a composition bias toward basic and acidic residues.

Belongs to the helicase family. AddA subfamily. As to quaternary structure, heterodimer of AddA and AddB/RexB. Mg(2+) is required as a cofactor.

The catalysed reaction is Couples ATP hydrolysis with the unwinding of duplex DNA by translocating in the 3'-5' direction.. It carries out the reaction ATP + H2O = ADP + phosphate + H(+). In terms of biological role, the heterodimer acts as both an ATP-dependent DNA helicase and an ATP-dependent, dual-direction single-stranded exonuclease. Recognizes the chi site generating a DNA molecule suitable for the initiation of homologous recombination. The AddA nuclease domain is required for chi fragment generation; this subunit has the helicase and 3' -&gt; 5' nuclease activities. In Desulfitobacterium hafniense (strain Y51), this protein is ATP-dependent helicase/nuclease subunit A.